Here is a 182-residue protein sequence, read N- to C-terminus: Inner membrane assembly complex subunit 17 (182 aa).

The N-terminal 45 residues, 1–45 (MLKRRSNALITLSRTKLFPITTVAYYHRRLLNQQRRAVSTSPKKE), are a transit peptide targeting the mitochondrion. Over 46-107 (IKSLEDLANL…EIPVKRFIRP (62 aa)) the chain is Mitochondrial matrix. Residues 108 to 127 (LWMFILMGSSVYLLLHFSWW) traverse the membrane as a helical segment. Residues 128–158 (KLEHEERESQLKKEVEILEHQLNELIIQDKT) adopt a coiled-coil conformation. The Mitochondrial intermembrane portion of the chain corresponds to 128–182 (KLEHEERESQLKKEVEILEHQLNELIIQDKTHNTSRGKGSNESTHMKPWYRRWFW).

Belongs to the INA17 family. Component of the inner membrane assembly (INA) complex, composed of INA17 and INA22. Interacts with a subset of F(1)F(0)-ATP synthase subunits of the F(1)-domain and the peripheral stalk.

It is found in the mitochondrion inner membrane. Functionally, component of the INA complex (INAC) that promotes the biogenesis of mitochondrial F(1)F(0)-ATP synthase. INAC facilitates the assembly of the peripheral stalk and promotes the assembly of the catalytic F(1)-domain with the membrane-embedded F(0)-domain. The protein is Inner membrane assembly complex subunit 17 of Saccharomyces cerevisiae (strain YJM789) (Baker's yeast).